A 240-amino-acid polypeptide reads, in one-letter code: 1-(5-phosphoribosyl)-5-[(5-phosphoribosylamino)methylideneamino] imidazole-4-carboxamide isomerase 2 (240 aa).

D8 (proton acceptor) is an active-site residue. D129 serves as the catalytic Proton donor.

Belongs to the HisA/HisF family.

The protein resides in the cytoplasm. It carries out the reaction 1-(5-phospho-beta-D-ribosyl)-5-[(5-phospho-beta-D-ribosylamino)methylideneamino]imidazole-4-carboxamide = 5-[(5-phospho-1-deoxy-D-ribulos-1-ylimino)methylamino]-1-(5-phospho-beta-D-ribosyl)imidazole-4-carboxamide. The protein operates within amino-acid biosynthesis; L-histidine biosynthesis; L-histidine from 5-phospho-alpha-D-ribose 1-diphosphate: step 4/9. The polypeptide is 1-(5-phosphoribosyl)-5-[(5-phosphoribosylamino)methylideneamino] imidazole-4-carboxamide isomerase 2 (Ruegeria sp. (strain TM1040) (Silicibacter sp.)).